A 232-amino-acid polypeptide reads, in one-letter code: MSDPAVEVTPAVPVASPAKAKKEKKPKSDKPKKPKAPRTHPPVSEMVVNAVKTLKERGGSSLQAIKKFLVAQYKVDVDKLAPFIKKYLKSAVEKGQLLQTKGKGASGSFKLPAAAKKEKVVKKPTKAAAEKKPKKAAAKPKKAGEKKVKKTIAKKPKAAAATKIKKPVAKTTKKPAAAKPAAKKAAPKPKAAPKPKAAKTETKPKRAAAPKAKKPAAEKKPKAAKKPAAKKA.

Residues 1–18 show a composition bias toward low complexity; it reads MSDPAVEVTPAVPVASPA. Disordered regions lie at residues 1 to 44 and 99 to 232; these read MSDP…PPVS and QTKG…AKKA. The H15 domain occupies 39-113; the sequence is THPPVSEMVV…GASGSFKLPA (75 aa). Composition is skewed to basic residues over residues 132–141, 147–173, 181–197, 205–214, and 222–232; these read KPKKAAAKPK, KVKK…KTTK, AAKK…KPKA, KRAAAPKAKK, and KAAKKPAAKKA.

This sequence belongs to the histone H1/H5 family.

The protein resides in the nucleus. It localises to the chromosome. Histones H1 are necessary for the condensation of nucleosome chains into higher-order structures. The polypeptide is Histone H1B (Chironomus tentans (Midge)).